The primary structure comprises 1476 residues: ABC-type transporter FG02316 (1476 aa).

N2 carries N-linked (GlcNAc...) asparagine glycosylation. 10 helical membrane-spanning segments follow: residues 23 to 43, 64 to 84, 97 to 117, 156 to 176, 266 to 286, 305 to 325, 384 to 404, 407 to 427, 485 to 505, and 532 to 552; these read FTLL…LLLA, WLYC…AFLV, SLPA…LSYV, AAIT…AETI, ILFI…QPFL, QGYG…VTTG, VWAN…QLGL, LIPV…VSFV, LLIW…VLSF, and LFAL…SFMG. One can recognise an ABC transmembrane type-1 1 domain in the interval 274–552; sequence LCFIGFTFCQ…FVTSLSSFMG (279 aa). The interval 586-615 is disordered; sequence ISGVSSSEEKHPVSPIQESMMKTEPSGDSP. The 226-residue stretch at 622–847 folds into the ABC transporter 1 domain; it reads IRNASFGYDR…SDNYVSHSDV (226 aa). N624 is a glycosylation site (N-linked (GlcNAc...) asparagine). 654 to 661 contributes to the ATP binding site; that stretch reads GPVGSGKS. 4 N-linked (GlcNAc...) asparagine glycosylation sites follow: N682, N696, N798, and N836. A disordered region spans residues 842–870; sequence VSHSDVSSPDGARSKAPSSGPASSSAPVP. Low complexity predominate over residues 855 to 870; sequence SKAPSSGPASSSAPVP. 6 helical membrane passes run 906-926, 950-970, 1021-1041, 1045-1065, 1137-1157, and 1167-1187; these read MNAI…AYIF, LGYY…FLVL, LIDM…VLCI, ILIA…LATL, WLTL…VVLV, and GLIG…KLLM. The region spanning 916-1195 is the ABC transmembrane type-1 2 domain; that stretch reads VFVLAICAYI…LMTFWTTLET (280 aa). The 233-residue stretch at 1232-1464 folds into the ABC transporter 2 domain; the sequence is ILFDQVSAGY…GPDASTFASM (233 aa). N-linked (GlcNAc...) asparagine glycosylation occurs at N1250. 1265 to 1272 provides a ligand contact to ATP; the sequence is GRTGSGKS. N-linked (GlcNAc...) asparagine glycosylation occurs at N1414.

Belongs to the ABC transporter superfamily. ABCC family. Conjugate transporter (TC 3.A.1.208) subfamily.

It is found in the cell membrane. ABC-type transporter; part of the gene cluster that mediates the biosynthesis of the fusahexin, a cyclic hydrophobic hexapeptide with the amino acid sequence cyclo-(D-Ala-L-Leu-D-allo-Thr-L-Pro-D-Leu-L-Leu) that plays an important role in cell surface hydrophobicity. This is ABC-type transporter FG02316 from Gibberella zeae (strain ATCC MYA-4620 / CBS 123657 / FGSC 9075 / NRRL 31084 / PH-1) (Wheat head blight fungus).